The chain runs to 105 residues: Met repressor (105 aa).

The protein belongs to the MetJ family. In terms of assembly, homodimer.

The protein resides in the cytoplasm. In terms of biological role, this regulatory protein, when combined with SAM (S-adenosylmethionine) represses the expression of the methionine regulon and of enzymes involved in SAM synthesis. The polypeptide is Met repressor (Pasteurella multocida (strain Pm70)).